A 200-amino-acid polypeptide reads, in one-letter code: GTP cyclohydrolase-2 (200 aa).

A GTP-binding site is contributed by 50-54 (RVHSE). Residues cysteine 55, cysteine 66, and cysteine 68 each contribute to the Zn(2+) site. GTP-binding positions include glutamine 71, 93-95 (EGR), and threonine 115. The active-site Proton acceptor is the aspartate 127. The Nucleophile role is filled by arginine 129. GTP contacts are provided by threonine 150 and lysine 155.

The protein belongs to the GTP cyclohydrolase II family. Zn(2+) is required as a cofactor.

The enzyme catalyses GTP + 4 H2O = 2,5-diamino-6-hydroxy-4-(5-phosphoribosylamino)-pyrimidine + formate + 2 phosphate + 3 H(+). It participates in cofactor biosynthesis; riboflavin biosynthesis; 5-amino-6-(D-ribitylamino)uracil from GTP: step 1/4. In terms of biological role, catalyzes the conversion of GTP to 2,5-diamino-6-ribosylamino-4(3H)-pyrimidinone 5'-phosphate (DARP), formate and pyrophosphate. This Acinetobacter baumannii (strain AB307-0294) protein is GTP cyclohydrolase-2.